A 546-amino-acid polypeptide reads, in one-letter code: Chaperonin GroEL (546 aa).

Residues 30 to 33 (TLGP), Lys-51, 87 to 91 (DGTTT), Gly-415, 479 to 481 (NAA), and Asp-495 each bind ATP. The segment at 526 to 546 (KKDEPAMPAGGGMGGMGGMDF) is disordered. Residues 534–546 (AGGGMGGMGGMDF) are compositionally biased toward gly residues.

Belongs to the chaperonin (HSP60) family. As to quaternary structure, forms a cylinder of 14 subunits composed of two heptameric rings stacked back-to-back. Interacts with the co-chaperonin GroES.

The protein localises to the cytoplasm. The enzyme catalyses ATP + H2O + a folded polypeptide = ADP + phosphate + an unfolded polypeptide.. In terms of biological role, together with its co-chaperonin GroES, plays an essential role in assisting protein folding. The GroEL-GroES system forms a nano-cage that allows encapsulation of the non-native substrate proteins and provides a physical environment optimized to promote and accelerate protein folding. This Xanthomonas campestris pv. campestris (strain 8004) protein is Chaperonin GroEL.